Reading from the N-terminus, the 20-residue chain is AAVPEAAAEATAEAAPVSEF.

The tract at residues 1 to 20 (AAVPEAAAEATAEAAPVSEF) is disordered.

In terms of assembly, homopentamer. Forms a cylindrical structure with a central pore. In terms of tissue distribution, detected in the hemolymph.

It is found in the secreted. In Aplysia californica (California sea hare), this protein is Haemoporin.